The sequence spans 558 residues: Aspartate--tRNA ligase 2, cytoplasmic (558 aa).

Positions M1–E18 are enriched in low complexity. The disordered stretch occupies residues M1–L57. S2 carries the N-acetylserine modification. Residues S20–R50 show a composition bias toward basic and acidic residues. The OB DNA-binding region spans V110–Y195. An L-aspartate-binding site is contributed by E286. The interval Q308–K311 is aspartate. R330 provides a ligand contact to L-aspartate. ATP-binding positions include R330–E332, R338–L340, and E481. Mg(2+)-binding residues include E481 and S484. Residues S484 and R488 each coordinate L-aspartate. ATP is bound at residue G529 to R532.

This sequence belongs to the class-II aminoacyl-tRNA synthetase family. Type 2 subfamily.

It is found in the cytoplasm. The protein localises to the cytosol. Its subcellular location is the endoplasmic reticulum. It carries out the reaction tRNA(Asp) + L-aspartate + ATP = L-aspartyl-tRNA(Asp) + AMP + diphosphate. Its function is as follows. Catalyzes the specific attachment of an amino acid to its cognate tRNA in a 2 step reaction: the amino acid (AA) is first activated by ATP to form AA-AMP and then transferred to the acceptor end of the tRNA. Involved in the perception of beta-aminobutyric acid (BABA) and required for BABA priming effect in disease resistance. The protein is Aspartate--tRNA ligase 2, cytoplasmic of Arabidopsis thaliana (Mouse-ear cress).